Here is a 436-residue protein sequence, read N- to C-terminus: Ribosomal protein uS12 methylthiotransferase RimO (436 aa).

The 119-residue stretch at 4–122 (KRIDIITLGC…LLQDLGKTYH (119 aa)) folds into the MTTase N-terminal domain. The [4Fe-4S] cluster site is built by Cys13, Cys51, Cys85, Cys146, Cys150, and Cys153. Positions 132-363 (TTPKHYAYLK…MDIQQGISAE (232 aa)) constitute a Radical SAM core domain. Positions 366–433 (AAKIGQQMKV…DFDLYAKILN (68 aa)) constitute a TRAM domain.

The protein belongs to the methylthiotransferase family. RimO subfamily. Requires [4Fe-4S] cluster as cofactor.

It is found in the cytoplasm. It carries out the reaction L-aspartate(89)-[ribosomal protein uS12]-hydrogen + (sulfur carrier)-SH + AH2 + 2 S-adenosyl-L-methionine = 3-methylsulfanyl-L-aspartate(89)-[ribosomal protein uS12]-hydrogen + (sulfur carrier)-H + 5'-deoxyadenosine + L-methionine + A + S-adenosyl-L-homocysteine + 2 H(+). In terms of biological role, catalyzes the methylthiolation of an aspartic acid residue of ribosomal protein uS12. This is Ribosomal protein uS12 methylthiotransferase RimO from Bacteroides thetaiotaomicron (strain ATCC 29148 / DSM 2079 / JCM 5827 / CCUG 10774 / NCTC 10582 / VPI-5482 / E50).